The sequence spans 230 residues: uncharacterized protein (230 aa).

The interval 1–57 (MPGPHSPNPGVGTNGPAPYPEPSSHEPQALDYPHDLGAAEPAFAPGPADDAALPPAA) is disordered. Low complexity predominate over residues 38 to 55 (AAEPAFAPGPADDAALPP). A helical transmembrane segment spans residues 75–95 (LLIGIVVALALVSAMTAAIIY).

It localises to the membrane. This is an uncharacterized protein from Mycobacterium tuberculosis (strain CDC 1551 / Oshkosh).